A 152-amino-acid chain; its full sequence is Large ribosomal subunit protein uL15 (152 aa).

A disordered region spans residues 1-55 (MRLHELKPNEGATHKKKRVGRGIGSGHGKTSTKGQKGQTSRSGDSKLPARFEGGQ). Positions 28–42 (GKTSTKGQKGQTSRS) are enriched in polar residues.

Belongs to the universal ribosomal protein uL15 family. Part of the 50S ribosomal subunit.

In terms of biological role, binds to the 23S rRNA. This chain is Large ribosomal subunit protein uL15, found in Sulfurihydrogenibium sp. (strain YO3AOP1).